The following is a 592-amino-acid chain: Aspartate--tRNA(Asp/Asn) ligase (592 aa).

Residue Glu177 coordinates L-aspartate. Positions 201–204 (QIFK) are aspartate. L-aspartate-binding residues include Arg223 and His452. 223–225 (RDE) contacts ATP. Residue Glu486 coordinates ATP. Residue Arg493 coordinates L-aspartate. Residue 538 to 541 (GIDR) participates in ATP binding.

It belongs to the class-II aminoacyl-tRNA synthetase family. Type 1 subfamily. Homodimer.

Its subcellular location is the cytoplasm. It catalyses the reaction tRNA(Asx) + L-aspartate + ATP = L-aspartyl-tRNA(Asx) + AMP + diphosphate. Functionally, aspartyl-tRNA synthetase with relaxed tRNA specificity since it is able to aspartylate not only its cognate tRNA(Asp) but also tRNA(Asn). Reaction proceeds in two steps: L-aspartate is first activated by ATP to form Asp-AMP and then transferred to the acceptor end of tRNA(Asp/Asn). This chain is Aspartate--tRNA(Asp/Asn) ligase, found in Anaplasma marginale (strain Florida).